Reading from the N-terminus, the 281-residue chain is Leukocyte antigen CD37 (281 aa).

Topologically, residues 1–17 (MSAQESCLSLIKYFLFV) are cytoplasmic. The helical transmembrane segment at 18-38 (FNLFFFVLGSLIFCFGIWILI) threads the bilayer. Over 39–59 (DKTSFVSFVGLAFVPLQIWSK) the chain is Extracellular. The helical transmembrane segment at 60–74 (VLAISGIFTMGIALL) threads the bilayer. Topologically, residues 75–85 (GCVGALKELRC) are cytoplasmic. Residues 86 to 111 (LLGLYFGMLLLLFATQITLGILISTQ) traverse the membrane as a helical segment. Over 112–241 (RAQLERSLRD…QGLQKWLHNN (130 aa)) the chain is Extracellular. Residues N170, N183, and N188 are each glycosylated (N-linked (GlcNAc...) asparagine). The helical transmembrane segment at 242 to 266 (LISIVGICLGVGLLELGFMTLSIFL) threads the bilayer. At 267–281 (CRNLDHVYNRLARYR) the chain is on the cytoplasmic side.

It belongs to the tetraspanin (TM4SF) family. In terms of assembly, interacts with SCIMP. Interacts with SOCS3. Interacts with DECTIN1/CLEC7A. Post-translationally, tyrosine phosphorylated; leading to activation of downstream signaling pathways. As to expression, B-lymphocytes. Antigen presenting cells.

Its subcellular location is the cell membrane. Structural component of specialized membrane microdomains known as tetraspanin-enriched microdomains (TERMs), which act as platforms for receptor clustering and signaling. Participates thereby in diverse biological functions such as cell signal transduction, adhesion, migration and protein trafficking. Upon ligand binding, two signaling pathways are activated, one acting through phosphorylation by LYN leading to cell death or a survival pathway with activation of GSK3B. Plays an essential role essential for clustering of integrin ITGA4/ITGB1 and promotes its mobility in the plasma membrane of B-cells. In turn, participates in ITGA4/ITGB1 integrin-mediated antiapoptotic signaling through AKT. Also plays a role in the migration of dendritic cells and neutrophils to draining lymph nodes, as well as in their integrin-mediated adhesion. Negatively regulates IL-6 responses through direct interaction with SOCS3 thereby preventing constitutive IL-6 signaling. Alternatively, inhibition of IL-6 signaling can also occur via interaction and stabilization of DECTIN1/CLEC7A at the cell membrane to inhibit its ability to promote the production of IL-6. This is Leukocyte antigen CD37 (CD37) from Homo sapiens (Human).